The chain runs to 504 residues: Putative F-box/FBD/LRR-repeat protein At3g59240 (504 aa).

An F-box domain is found at 7–60 (KDIISDLPEALICHLLSFVPTKEAALTSLLSEKWRYLFAFAPILDFDDSVWMQS). LRR repeat units follow at residues 69–95 (HRKF…SLNC), 145–171 (RIRT…DLSS), 173–198 (WFRD…TMSD), 286–312 (TNLF…TFCC), 329–354 (DKDV…VFKG), 369–396 (CLCK…KFGE), and 403–428 (DEEK…ILHY). In terms of domain architecture, FBD spans 382 to 427 (SSSPVKVLKILKFGEVASYFGDEEKQLELVKYFLETMPNLEQMILH).

The polypeptide is Putative F-box/FBD/LRR-repeat protein At3g59240 (Arabidopsis thaliana (Mouse-ear cress)).